The primary structure comprises 440 residues: tRNA-2-methylthio-N(6)-dimethylallyladenosine synthase (440 aa).

The region spanning 4–120 is the MTTase N-terminal domain; that stretch reads NYVYIETFGC…LNDMVLAAER (117 aa). 6 residues coordinate [4Fe-4S] cluster: Cys-13, Cys-49, Cys-83, Cys-158, Cys-162, and Cys-165. The region spanning 144–374 is the Radical SAM core domain; that stretch reads GTARISSFVT…QALQKRTTME (231 aa). One can recognise a TRAM domain in the interval 377-439; it reads DVLLGTRQTV…QNSLLGELLP (63 aa).

This sequence belongs to the methylthiotransferase family. MiaB subfamily. In terms of assembly, monomer. [4Fe-4S] cluster serves as cofactor.

It localises to the cytoplasm. It carries out the reaction N(6)-dimethylallyladenosine(37) in tRNA + (sulfur carrier)-SH + AH2 + 2 S-adenosyl-L-methionine = 2-methylsulfanyl-N(6)-dimethylallyladenosine(37) in tRNA + (sulfur carrier)-H + 5'-deoxyadenosine + L-methionine + A + S-adenosyl-L-homocysteine + 2 H(+). Its function is as follows. Catalyzes the methylthiolation of N6-(dimethylallyl)adenosine (i(6)A), leading to the formation of 2-methylthio-N6-(dimethylallyl)adenosine (ms(2)i(6)A) at position 37 in tRNAs that read codons beginning with uridine. This Pelobacter propionicus (strain DSM 2379 / NBRC 103807 / OttBd1) protein is tRNA-2-methylthio-N(6)-dimethylallyladenosine synthase.